The chain runs to 484 residues: Probable endopeptidase p60 (484 aa).

The N-terminal stretch at 1–27 is a signal peptide; sequence MNMKKATIAATAGIAVTAFAAPTIASA. Residues 28–71 enclose the LysM 1 domain; it reads STVVVEAGDTLWGIAQSKGTTVDAIKKANNLTTDKIVPGQKLQV. Residues 80 to 144 enclose the SH3b domain; that stretch reads KTEKSVSATW…VNGKYLTDKA (65 aa). The tract at residues 150–192 is disordered; it reads APTQEVKKETTTQQAAPAAETKTEVKQTTQATTPAPKVAETKE. Residues 160 to 169 show a composition bias toward low complexity; sequence TTQQAAPAAE. The LysM 2 domain occupies 201–244; it reads TTHAVKSGDTIWALSVKYGVSVQDIMSWNNLSSSSIYVGQKLAI. Residues 254–367 form a disordered region; sequence KAEVKTEAPA…QGSSNNNSNS (114 aa). 2 stretches are compositionally biased toward low complexity: residues 273 to 282 and 289 to 367; these read KENTNTNTAT and ATQQ…NSNS. The segment at 311 to 355 is 19 X 2 AA tandem repeats of T-N; that stretch reads TNTNANKTNTNTNTNTNTNNTNTNTPSKNTNTNSNTNTNTNSNTN. Residues 366–484 enclose the NlpC/P60 domain; it reads NSSASAIIAE…GKYLVGFGRV (119 aa). Catalysis depends on C396, which acts as the Nucleophile. H446 (proton acceptor) is an active-site residue. The active site involves N458.

This sequence belongs to the peptidase C40 family.

Its subcellular location is the cell surface. The protein resides in the secreted. Its function is as follows. This major extracellular protein may be involved in the invasion of non-professional phagocytic cells by Listeria. The protein is Probable endopeptidase p60 (iap) of Listeria monocytogenes serovar 1/2a (strain ATCC BAA-679 / EGD-e).